Consider the following 240-residue polypeptide: HTH-type transcriptional regulator Mce2R (240 aa).

In terms of domain architecture, HTH gntR-type spans 9–77; the sequence is RSVPEEVFEQ…QGDVTTVRDF (69 aa). The segment at residues 37-56 is a DNA-binding region (H-T-H motif); sequence ERRLAELLGVSRPAVREALK.

Its function is as follows. Negatively regulates the expression of its operon as well as expression of end (endonuclease 4). This Mycobacterium tuberculosis (strain CDC 1551 / Oshkosh) protein is HTH-type transcriptional regulator Mce2R (mce2R).